Consider the following 129-residue polypeptide: uncharacterized protein (129 aa).

Residues 1–129 are disordered; sequence MWLWQDIQCC…HTSNGRTGDL (129 aa). Basic and acidic residues predominate over residues 87–100; the sequence is KGADTRRLPRETRP. A compositionally biased stretch (polar residues) spans 119–129; it reads PHTSNGRTGDL.

This is an uncharacterized protein from Homo sapiens (Human).